Here is a 189-residue protein sequence, read N- to C-terminus: MRLVIGISGASGVVLGYHMLKVLRFFPECETHLVISEGAKLTFGLETDLKIEDVEKLADFVYSNTNLAASISSGSFKTDGMIVIPCSMKTLSGIATGYAENLLIRAADVCLKENRKVVLVPREMPFGKLHIRNMKEASDLGCVIIPPLLTFYNNPQTIEEQINHIIGKILMQFGLEHEKFKAWEGTKDD.

Residues 9-11 (GAS), Ser36, 87-90 (SMKT), and Arg122 each bind FMN.

It belongs to the UbiX/PAD1 family. YclB subfamily. In terms of assembly, homododecamer.

The enzyme catalyses dimethylallyl phosphate + FMNH2 = prenylated FMNH2 + phosphate. Its function is as follows. Involved in the non-oxidative decarboxylation and detoxification of phenolic derivatives under anaerobic conditions. Flavin prenyltransferase that catalyzes the synthesis of the prenylated FMN cofactor (prenyl-FMN) for phenolic acid decarboxylase. In Sedimentibacter hydroxybenzoicus (Clostridium hydroxybenzoicum), this protein is Probable UbiX-like flavin prenyltransferase.